The following is a 227-amino-acid chain: Cytochrome c oxidase subunit 2 (227 aa).

The Mitochondrial intermembrane portion of the chain corresponds to 1–14 (MAYPFQLGLQDATS). The helical transmembrane segment at 15–45 (PIMEELLHFHDHTLMIVFLISSLVLYIISLM) threads the bilayer. Over 46–59 (LTTKLTHTSTMDAQ) the chain is Mitochondrial matrix. A helical membrane pass occupies residues 60 to 87 (EVETVWTILPAIILILIALPSLRILYMM). Residues 88–227 (DEINNPSLTV…YFETWSALMV (140 aa)) are Mitochondrial intermembrane-facing. The Cu cation site is built by histidine 161, cysteine 196, glutamate 198, cysteine 200, histidine 204, and methionine 207. Glutamate 198 contributes to the Mg(2+) binding site. Tyrosine 218 is subject to Phosphotyrosine.

Belongs to the cytochrome c oxidase subunit 2 family. Component of the cytochrome c oxidase (complex IV, CIV), a multisubunit enzyme composed of 14 subunits. The complex is composed of a catalytic core of 3 subunits MT-CO1, MT-CO2 and MT-CO3, encoded in the mitochondrial DNA, and 11 supernumerary subunits COX4I, COX5A, COX5B, COX6A, COX6B, COX6C, COX7A, COX7B, COX7C, COX8 and NDUFA4, which are encoded in the nuclear genome. The complex exists as a monomer or a dimer and forms supercomplexes (SCs) in the inner mitochondrial membrane with NADH-ubiquinone oxidoreductase (complex I, CI) and ubiquinol-cytochrome c oxidoreductase (cytochrome b-c1 complex, complex III, CIII), resulting in different assemblies (supercomplex SCI(1)III(2)IV(1) and megacomplex MCI(2)III(2)IV(2)). Found in a complex with TMEM177, COA6, COX18, COX20, SCO1 and SCO2. Interacts with TMEM177 in a COX20-dependent manner. Interacts with COX20. Interacts with COX16. It depends on Cu cation as a cofactor.

The protein resides in the mitochondrion inner membrane. It catalyses the reaction 4 Fe(II)-[cytochrome c] + O2 + 8 H(+)(in) = 4 Fe(III)-[cytochrome c] + 2 H2O + 4 H(+)(out). Functionally, component of the cytochrome c oxidase, the last enzyme in the mitochondrial electron transport chain which drives oxidative phosphorylation. The respiratory chain contains 3 multisubunit complexes succinate dehydrogenase (complex II, CII), ubiquinol-cytochrome c oxidoreductase (cytochrome b-c1 complex, complex III, CIII) and cytochrome c oxidase (complex IV, CIV), that cooperate to transfer electrons derived from NADH and succinate to molecular oxygen, creating an electrochemical gradient over the inner membrane that drives transmembrane transport and the ATP synthase. Cytochrome c oxidase is the component of the respiratory chain that catalyzes the reduction of oxygen to water. Electrons originating from reduced cytochrome c in the intermembrane space (IMS) are transferred via the dinuclear copper A center (CU(A)) of subunit 2 and heme A of subunit 1 to the active site in subunit 1, a binuclear center (BNC) formed by heme A3 and copper B (CU(B)). The BNC reduces molecular oxygen to 2 water molecules using 4 electrons from cytochrome c in the IMS and 4 protons from the mitochondrial matrix. In Canis adustus (Side-striped jackal), this protein is Cytochrome c oxidase subunit 2 (MT-CO2).